Reading from the N-terminus, the 1296-residue chain is DNA-directed RNA polymerase subunit beta' (1296 aa).

C60, C62, C75, and C78 together coordinate Zn(2+). The tract at residues G188–R209 is disordered. Mg(2+)-binding residues include D535, D537, and D539. The Zn(2+) site is built by C877, C954, C961, and C964.

Belongs to the RNA polymerase beta' chain family. As to quaternary structure, the RNAP catalytic core consists of 2 alpha, 1 beta, 1 beta' and 1 omega subunit. When a sigma factor is associated with the core the holoenzyme is formed, which can initiate transcription. Requires Mg(2+) as cofactor. Zn(2+) serves as cofactor.

The enzyme catalyses RNA(n) + a ribonucleoside 5'-triphosphate = RNA(n+1) + diphosphate. In terms of biological role, DNA-dependent RNA polymerase catalyzes the transcription of DNA into RNA using the four ribonucleoside triphosphates as substrates. The protein is DNA-directed RNA polymerase subunit beta' of Parafrankia sp. (strain EAN1pec).